Consider the following 1003-residue polypeptide: Methyl-CpG-binding domain protein 6 (1003 aa).

One can recognise an MBD domain in the interval 13–83 (AGGPAATPVP…KVFNFDPLAP (71 aa)). A required for interaction with ASXL1/2/3 region spans residues 59–70 (DGTCKCGLECPL). Disordered stretches follow at residues 123–222 (CSHS…PPPA), 241–302 (VPSD…ATMH), 334–619 (AKAQ…SAPP), 631–659 (ALGP…GLGD), 684–736 (ASLD…PQLL), and 753–1003 (SSPG…KLAP). Pro residues-rich tracts occupy residues 142-157 (PGPP…PPTT) and 168-196 (QDPP…PDPV). The span at 252–262 (HASSSPPSDSP) shows a compositional bias: low complexity. Residues 273–293 (PPLPPSNNPPGPPGPPGPATQ) show a composition bias toward pro residues. The span at 351–363 (AQAPSAAHASPRP) shows a compositional bias: low complexity. Residues 393-409 (APAPVPQPFPLPEPSQP) show a composition bias toward pro residues. Over residues 410–428 (ILPSVLSLLGLPTPGPSHS) the composition is skewed to low complexity. Residues 441 to 458 (LPPPPALSSGSPPQPRHP) are compositionally biased toward pro residues. Low complexity-rich tracts occupy residues 462–500 (SLPG…PSDG) and 533–550 (GAGF…LSLG). Residues 571–590 (QPPPEPLLPPPGGPGPPSAP) show a composition bias toward pro residues. Residues 591–604 (GEPEGPSLLVASLL) are compositionally biased toward low complexity. The span at 605–618 (SPPPSDLLPPPSAP) shows a compositional bias: pro residues. The segment covering 636 to 650 (AGDGEGSAEGAGGPN) has biased composition (gly residues). Residues 708–719 (TSSVTTATTDPG) show a composition bias toward polar residues. The span at 768–798 (LLSSQLGLQLLPGGGAPPALSEASSPLACLL) shows a compositional bias: low complexity. A compositionally biased stretch (pro residues) spans 805–817 (PEQPDAPCLPPES). A compositionally biased stretch (low complexity) spans 818–837 (PASALEPEPARPPLSALAPP). A compositionally biased stretch (basic residues) spans 947–958 (RKSRRGRRRKYN). Over residues 960-969 (ARNSSSSRQD) the composition is skewed to polar residues. Over residues 989–1003 (RPGRPAKNKRRKLAP) the composition is skewed to basic residues.

In terms of assembly, core component of the polycomb repressive deubiquitinase (PR-DUB) complex, at least composed of BAP1, one of ASXL1, ASXL2 or (probably) ASXL3, and one of MBD5 or MBD6. Distinct combinations of ASXL and MBD proteins may preferentially bind specific histone modification marks. The PR-DUB core associates with a number of accessory proteins, including FOXK1, FOXK2, KDM1B, HCFC1 and OGT; KDM1B specifically associates with ASXL2 PR-DUB complexes. Interacts (via MBD domain) with ASXL1, ASXL2 and ASXL3 (via PHD domain); the interaction is probably direct, mediates association with other PR-DUB complex core components. Expressed at highest levels in adult testis.

It localises to the nucleus. Its subcellular location is the chromosome. Non-catalytic component of the polycomb repressive deubiquitinase (PR-DUB) complex, a complex that specifically mediates deubiquitination of histone H2A monoubiquitinated at 'Lys-120' (H2AK119ub1). Important for stability of PR-DUB components and stimulating its ubiquitinase activity. As part of the PR-DUB complex, associates with chromatin enriched in histone marks H3K4me1, H3K4me3, and H3K27Ac, but not in H3K27me3. MBD5 and MBD6 containing complexes associate with distinct chromatin regions enriched in genes involved in different pathways. Heterochromatin recruitment is not mediated by DNA methylation. The PR-DUB complex is an epigenetic regulator of gene expression, including genes involved in development, cell communication, signaling, cell proliferation and cell viability; may promote cancer cell growth. In Mus musculus (Mouse), this protein is Methyl-CpG-binding domain protein 6 (Mbd6).